The primary structure comprises 265 residues: Glutamate racemase (265 aa).

Residues 12-13 and 44-45 contribute to the substrate site; these read DS and YG. The active-site Proton donor/acceptor is the Cys-75. 76 to 77 contacts substrate; the sequence is NT. The active-site Proton donor/acceptor is Cys-186. 187 to 188 is a binding site for substrate; that stretch reads TH.

This sequence belongs to the aspartate/glutamate racemases family.

The enzyme catalyses L-glutamate = D-glutamate. It functions in the pathway cell wall biogenesis; peptidoglycan biosynthesis. Provides the (R)-glutamate required for cell wall biosynthesis. The sequence is that of Glutamate racemase from Pseudomonas paraeruginosa (strain DSM 24068 / PA7) (Pseudomonas aeruginosa (strain PA7)).